Consider the following 409-residue polypeptide: MAREKFERTKPHVNIGTIGHVDHGKTTLTAAITATLALDGNAKVKDYPDIDGAPEERARGITINTAHVEYETENGHYAHVDCPGHADYVKNMITGAAQMDGAILVVSAADGPMPQTREHILLSKQVGVPDIVVFLNKEDQVDDAELLELVELEVRELLSAYDFQVMTFRFAPGSALQAIEAISSNPAIKRGDNPWVDKIFALMDAVDEYIPTPERDIEKTFLMAIEDVFSITGRGTVATGRIERGVVKVGDTVEIVGVGDTQTTTITGIEMFQKTLDEGFAGDNVGILLRGVTREDIEAGMVLSEPGTITPHTNFESEVYVLTKDEGGRHTPFFTGYRPQFYVRTTDVTGAITQFTADDGSIVEMVMPGDRIKMTAELIYPVAIEEGMRFAIREGGRTIGAGVVSKIIQ.

The 205-residue stretch at 10-214 (KPHVNIGTIG…AVDEYIPTPE (205 aa)) folds into the tr-type G domain. The segment at 19-26 (GHVDHGKT) is G1. 19–26 (GHVDHGKT) is a GTP binding site. Thr-26 contributes to the Mg(2+) binding site. Residues 60 to 64 (GITIN) form a G2 region. A G3 region spans residues 81 to 84 (DCPG). Residues 81 to 85 (DCPGH) and 136 to 139 (NKED) contribute to the GTP site. Residues 136-139 (NKED) are G4. The segment at 174–176 (SAL) is G5.

This sequence belongs to the TRAFAC class translation factor GTPase superfamily. Classic translation factor GTPase family. EF-Tu/EF-1A subfamily.

Its subcellular location is the plastid. It localises to the chloroplast. It carries out the reaction GTP + H2O = GDP + phosphate + H(+). Its function is as follows. GTP hydrolase that promotes the GTP-dependent binding of aminoacyl-tRNA to the A-site of ribosomes during protein biosynthesis. This chain is Elongation factor Tu, chloroplastic (tufA), found in Trieres chinensis (Marine centric diatom).